We begin with the raw amino-acid sequence, 127 residues long: Fumarate reductase subunit C (127 aa).

Transmembrane regions (helical) follow at residues Ala-30–Val-50, Gly-58–Gly-78, and Ile-107–Val-127.

It belongs to the FrdC family. As to quaternary structure, part of an enzyme complex containing four subunits: a flavoprotein (FrdA), an iron-sulfur protein (FrdB), and two hydrophobic anchor proteins (FrdC and FrdD).

The protein resides in the cell inner membrane. Functionally, anchors the catalytic components of the fumarate reductase complex to the cell membrane, binds quinones. In Vibrio parahaemolyticus serotype O3:K6 (strain RIMD 2210633), this protein is Fumarate reductase subunit C.